The following is a 1318-amino-acid chain: Major tegument protein (1318 aa).

The protein belongs to the herpesviridae MTP family. In terms of assembly, interacts with host DAXX; this interaction disrupts the chromatin remodeling complex ATRX:DAXX and thus allows viral transcription. Interacts with host SMC6; this interaction targets SMC5-SMC6 complex for proteasomal degradation.

It is found in the virion tegument. Its subcellular location is the host nucleus. Tegument protein that plays a role in the inhibition of host intrinsic defenses to promote viral early gene activation. Interacts with host DAXX and thereby disrupts the complex between DAXX and ATRX. Suppresses the DAXX-ATRX dependent deposition of histone H3.3 on viral chromatin allowing viral transcription. Targets also host SMC5/6 for proteasomal degradation in a CUL7 and calpain-dependent manner to support nuclear membrane-less replication compartment formation and lytic virus replication. In Epstein-Barr virus (strain GD1) (HHV-4), this protein is Major tegument protein.